We begin with the raw amino-acid sequence, 412 residues long: Putative disintegrin and metalloproteinase domain-containing protein 5 (412 aa).

In terms of domain architecture, Disintegrin spans 111–199 (EKYADTNILL…YCLPDTYVRD (89 aa)). Positions 351–385 (NLKLCDASNHCDRHGVCNNFNHCHCEKGYNPPYCQ) constitute an EGF-like domain.

As to quaternary structure, interacts with TEX101. Highly expressed in testis.

In terms of biological role, this is a non catalytic metalloprotease-like protein. The chain is Putative disintegrin and metalloproteinase domain-containing protein 5 (ADAM5) from Homo sapiens (Human).